Here is a 198-residue protein sequence, read N- to C-terminus: Ribonuclease HII 1 (198 aa).

An RNase H type-2 domain is found at 7–196 (ELTAGVDEAG…VRAALARAAA (190 aa)). Residues aspartate 13, glutamate 14, and aspartate 105 each contribute to the a divalent metal cation site.

This sequence belongs to the RNase HII family. It depends on Mn(2+) as a cofactor. Mg(2+) serves as cofactor.

The protein resides in the cytoplasm. The catalysed reaction is Endonucleolytic cleavage to 5'-phosphomonoester.. Endonuclease that specifically degrades the RNA of RNA-DNA hybrids. The chain is Ribonuclease HII 1 from Methylibium petroleiphilum (strain ATCC BAA-1232 / LMG 22953 / PM1).